We begin with the raw amino-acid sequence, 360 residues long: MIMQEWFQNLFAATLGLGDLGITVGLVVSVIVKIVIILIPLILTVAYLTYFERKVIGFMQLRVGPNVTGPWGLIQPFADVFKLLFKEVTRPKLSNKALFYIGPIMSLAPSFAAWAVIPFNEEWVLTNINIGLLYILMITSLSVYGVIIAGWASNSKYSFLGAMRASAQSISYEIAMSAALVCVVMVSGSMNFSDIVAAQAKGIAGGSVFSWNWLPLFPIFIVYLISAVAETNRAPFDVAEGESEIVAGHHVEYSGFAFALFFLAEYIFMILIAALTSLMFLGGWLSPFPQSWGFIGTPSAFWMFVKMAAVLYWYLWIRATFPRYRYDQIMRLGWKVLIPIGFAYIVILGVWMISPLNLWK.

The next 8 helical transmembrane spans lie at 22–42, 97–117, 130–150, 170–190, 208–228, 255–275, 292–312, and 336–356; these read ITVGLVVSVIVKIVIILIPLI, ALFYIGPIMSLAPSFAAWAVI, IGLLYILMITSLSVYGVIIAG, ISYEIAMSAALVCVVMVSGSM, VFSWNWLPLFPIFIVYLISAV, GFAFALFFLAEYIFMILIAAL, WGFIGTPSAFWMFVKMAAVLY, and VLIPIGFAYIVILGVWMISPL.

It belongs to the complex I subunit 1 family. As to quaternary structure, NDH-1 is composed of 14 different subunits. Subunits NuoA, H, J, K, L, M, N constitute the membrane sector of the complex.

Its subcellular location is the cell inner membrane. It catalyses the reaction a quinone + NADH + 5 H(+)(in) = a quinol + NAD(+) + 4 H(+)(out). NDH-1 shuttles electrons from NADH, via FMN and iron-sulfur (Fe-S) centers, to quinones in the respiratory chain. The immediate electron acceptor for the enzyme in this species is believed to be ubiquinone. Couples the redox reaction to proton translocation (for every two electrons transferred, four hydrogen ions are translocated across the cytoplasmic membrane), and thus conserves the redox energy in a proton gradient. This subunit may bind ubiquinone. The polypeptide is NADH-quinone oxidoreductase subunit H (Neisseria meningitidis serogroup C / serotype 2a (strain ATCC 700532 / DSM 15464 / FAM18)).